The chain runs to 513 residues: Putative GMP synthase [glutamine-hydrolyzing] (513 aa).

The Glutamine amidotransferase type-1 domain occupies 8–198; that stretch reads MIVVLDFGGQ…AFAVCGCEGN (191 aa). The Nucleophile role is filled by Cys85. Residue Glu174 is part of the active site. Residues 199-388 enclose the GMPS ATP-PPase domain; that stretch reads WSMENFIELE…LGIPDEVVWR (190 aa). Position 226-232 (226-232) interacts with ATP; that stretch reads SGGVDSS.

As to quaternary structure, homodimer.

The enzyme catalyses XMP + L-glutamine + ATP + H2O = GMP + L-glutamate + AMP + diphosphate + 2 H(+). It functions in the pathway purine metabolism; GMP biosynthesis; GMP from XMP (L-Gln route): step 1/1. In terms of biological role, catalyzes the synthesis of GMP from XMP. In Halalkalibacterium halodurans (strain ATCC BAA-125 / DSM 18197 / FERM 7344 / JCM 9153 / C-125) (Bacillus halodurans), this protein is Putative GMP synthase [glutamine-hydrolyzing] (guaA).